We begin with the raw amino-acid sequence, 356 residues long: UDP-N-acetylglucosamine--N-acetylmuramyl-(pentapeptide) pyrophosphoryl-undecaprenol N-acetylglucosamine transferase (356 aa).

2 residues coordinate UDP-N-acetyl-alpha-D-glucosamine: serine 198 and glutamine 289.

The protein belongs to the glycosyltransferase 28 family. MurG subfamily.

The protein localises to the cell membrane. It carries out the reaction Mur2Ac(oyl-L-Ala-gamma-D-Glu-L-Lys-D-Ala-D-Ala)-di-trans,octa-cis-undecaprenyl diphosphate + UDP-N-acetyl-alpha-D-glucosamine = beta-D-GlcNAc-(1-&gt;4)-Mur2Ac(oyl-L-Ala-gamma-D-Glu-L-Lys-D-Ala-D-Ala)-di-trans,octa-cis-undecaprenyl diphosphate + UDP + H(+). It functions in the pathway cell wall biogenesis; peptidoglycan biosynthesis. In terms of biological role, cell wall formation. Catalyzes the transfer of a GlcNAc subunit on undecaprenyl-pyrophosphoryl-MurNAc-pentapeptide (lipid intermediate I) to form undecaprenyl-pyrophosphoryl-MurNAc-(pentapeptide)GlcNAc (lipid intermediate II). This is UDP-N-acetylglucosamine--N-acetylmuramyl-(pentapeptide) pyrophosphoryl-undecaprenol N-acetylglucosamine transferase from Streptococcus thermophilus (strain CNRZ 1066).